The primary structure comprises 117 residues: uncharacterized protein (117 aa).

The next 3 helical transmembrane spans lie at 32 to 52, 56 to 76, and 87 to 107; these read VSSS…VTVV, VGVA…VTLL, and LSWC…SFFF.

Its subcellular location is the membrane. This is an uncharacterized protein from Saccharomyces cerevisiae (strain ATCC 204508 / S288c) (Baker's yeast).